Consider the following 100-residue polypeptide: Large ribosomal subunit protein uL23 (100 aa).

Belongs to the universal ribosomal protein uL23 family. As to quaternary structure, part of the 50S ribosomal subunit. Contacts protein L29, and trigger factor when it is bound to the ribosome.

One of the early assembly proteins it binds 23S rRNA. One of the proteins that surrounds the polypeptide exit tunnel on the outside of the ribosome. Forms the main docking site for trigger factor binding to the ribosome. The polypeptide is Large ribosomal subunit protein uL23 (Idiomarina loihiensis (strain ATCC BAA-735 / DSM 15497 / L2-TR)).